We begin with the raw amino-acid sequence, 676 residues long: UvrABC system protein B (676 aa).

One can recognise a Helicase ATP-binding domain in the interval 26-414 (EGLDAGLAHQ…SAGEIADQVV (389 aa)). 39 to 46 (GVTGSGKT) is a binding site for ATP. Residues 92 to 115 (YYDYYQPEAYVPTTDTFIEKDSSV) carry the Beta-hairpin motif. Positions 432–598 (QVDDLLSEIR…ALKRNIKDIM (167 aa)) constitute a Helicase C-terminal domain. Positions 636–671 (EKEITKLEAQMYKHAQDLEFELAAQKRDEIEKLRQQ) constitute a UVR domain.

The protein belongs to the UvrB family. In terms of assembly, forms a heterotetramer with UvrA during the search for lesions. Interacts with UvrC in an incision complex.

It localises to the cytoplasm. In terms of biological role, the UvrABC repair system catalyzes the recognition and processing of DNA lesions. A damage recognition complex composed of 2 UvrA and 2 UvrB subunits scans DNA for abnormalities. Upon binding of the UvrA(2)B(2) complex to a putative damaged site, the DNA wraps around one UvrB monomer. DNA wrap is dependent on ATP binding by UvrB and probably causes local melting of the DNA helix, facilitating insertion of UvrB beta-hairpin between the DNA strands. Then UvrB probes one DNA strand for the presence of a lesion. If a lesion is found the UvrA subunits dissociate and the UvrB-DNA preincision complex is formed. This complex is subsequently bound by UvrC and the second UvrB is released. If no lesion is found, the DNA wraps around the other UvrB subunit that will check the other stand for damage. The polypeptide is UvrABC system protein B (Vibrio vulnificus (strain CMCP6)).